The following is a 275-amino-acid chain: 3-methyl-2-oxobutanoate hydroxymethyltransferase (275 aa).

Mg(2+) contacts are provided by D44 and D83. 3-methyl-2-oxobutanoate-binding positions include 44-45 (DS), D83, and K113. Residue E115 coordinates Mg(2+). Catalysis depends on E182, which acts as the Proton acceptor.

It belongs to the PanB family. Homodecamer; pentamer of dimers. Mg(2+) is required as a cofactor.

It localises to the cytoplasm. The enzyme catalyses 3-methyl-2-oxobutanoate + (6R)-5,10-methylene-5,6,7,8-tetrahydrofolate + H2O = 2-dehydropantoate + (6S)-5,6,7,8-tetrahydrofolate. It functions in the pathway cofactor biosynthesis; (R)-pantothenate biosynthesis; (R)-pantoate from 3-methyl-2-oxobutanoate: step 1/2. In terms of biological role, catalyzes the reversible reaction in which hydroxymethyl group from 5,10-methylenetetrahydrofolate is transferred onto alpha-ketoisovalerate to form ketopantoate. The chain is 3-methyl-2-oxobutanoate hydroxymethyltransferase from Clostridium botulinum (strain 657 / Type Ba4).